Here is a 342-residue protein sequence, read N- to C-terminus: MFKETLRECMEGHTLAERKAEQVMDAIMKGEATASQIASLLTVLRFRGETVAEMTGFARAMRRHSIQIEHSFSQVVDTCGTGGDDVGTFNISTATALLVSALGVPVAKHGNRAVSSKSGSADVLEALQIPIQSSPEEATASLQKHNMCFMFAPLYHVAMKHAVAPRKEIGFRTIFNLLGPLTNPARAEHQLIGVYDRNFAEKMAETLRRLGTKHSLLVAGHGGLDELSITGPSTVFEVKGDAIDRYELIPEDVGLERGDLAQIQVSTVQESATLIDQVLIGKANKSAQQIVLLNAGAALYAADRVDSIKAGVALAKEGIASGHVADHVRNLRQTDQEAEQHA.

5-phospho-alpha-D-ribose 1-diphosphate contacts are provided by residues Gly-80, 83–84 (GD), Thr-88, 90–93 (NIST), 108–116 (KHGNRAVSS), and Ser-120. Position 80 (Gly-80) interacts with anthranilate. Residue Ser-92 coordinates Mg(2+). Asn-111 lines the anthranilate pocket. Anthranilate is bound at residue Arg-166. The Mg(2+) site is built by Asp-225 and Glu-226.

The protein belongs to the anthranilate phosphoribosyltransferase family. Homodimer. Mg(2+) serves as cofactor.

The enzyme catalyses N-(5-phospho-beta-D-ribosyl)anthranilate + diphosphate = 5-phospho-alpha-D-ribose 1-diphosphate + anthranilate. It participates in amino-acid biosynthesis; L-tryptophan biosynthesis; L-tryptophan from chorismate: step 2/5. Functionally, catalyzes the transfer of the phosphoribosyl group of 5-phosphorylribose-1-pyrophosphate (PRPP) to anthranilate to yield N-(5'-phosphoribosyl)-anthranilate (PRA). The sequence is that of Anthranilate phosphoribosyltransferase from Halalkalibacterium halodurans (strain ATCC BAA-125 / DSM 18197 / FERM 7344 / JCM 9153 / C-125) (Bacillus halodurans).